The chain runs to 369 residues: Maltose/maltodextrin import ATP-binding protein MalK (369 aa).

The region spanning 4–234 (VTLHNVSKAY…PVNRFVASFI (231 aa)) is the ABC transporter domain. An ATP-binding site is contributed by 36–43 (GPSGCGKS).

It belongs to the ABC transporter superfamily. Maltooligosaccharide importer (TC 3.A.1.1.1) family. In terms of assembly, the complex is composed of two ATP-binding proteins (MalK), two transmembrane proteins (MalG and MalK) and a solute-binding protein (MalE).

The protein resides in the cell inner membrane. The catalysed reaction is D-maltose(out) + ATP + H2O = D-maltose(in) + ADP + phosphate + H(+). Functionally, part of the ABC transporter complex MalEFGK involved in maltose/maltodextrin import. Responsible for energy coupling to the transport system. The polypeptide is Maltose/maltodextrin import ATP-binding protein MalK (Photorhabdus laumondii subsp. laumondii (strain DSM 15139 / CIP 105565 / TT01) (Photorhabdus luminescens subsp. laumondii)).